A 150-amino-acid polypeptide reads, in one-letter code: UPF0735 ACT domain-containing protein DSY2247 (150 aa).

The 76-residue stretch at 74-149 (TFSLTLENTA…GVRKIEVIGQ (76 aa)) folds into the ACT domain.

Belongs to the UPF0735 family.

The sequence is that of UPF0735 ACT domain-containing protein DSY2247 from Desulfitobacterium hafniense (strain Y51).